Consider the following 286-residue polypeptide: uncharacterized protein (286 aa).

Belongs to the methyltransferase superfamily.

Its function is as follows. Involved in osmoadaptation. This is an uncharacterized protein from Emericella nidulans (strain FGSC A4 / ATCC 38163 / CBS 112.46 / NRRL 194 / M139) (Aspergillus nidulans).